The primary structure comprises 1309 residues: Mediator of RNA polymerase II transcription subunit 33A (1309 aa).

The disordered stretch occupies residues 809-829 (QTLNPVNSGTSSSSGAASEDS). The span at 816-826 (SGTSSSSGAAS) shows a compositional bias: low complexity.

It belongs to the Mediator complex subunit 33 family. In terms of assembly, component of the Mediator complex.

It localises to the nucleus. Functionally, component of the Mediator complex, a coactivator involved in the regulated transcription of nearly all RNA polymerase II-dependent genes. Mediator functions as a bridge to convey information from gene-specific regulatory proteins to the basal RNA polymerase II transcription machinery. The Mediator complex, having a compact conformation in its free form, is recruited to promoters by direct interactions with regulatory proteins and serves for the assembly of a functional preinitiation complex with RNA polymerase II and the general transcription factors. Involved in the repression of phenylpropanoid biosynthesis. May compete with MED33B for common binding partners or for occupancy in Mediator. The polypeptide is Mediator of RNA polymerase II transcription subunit 33A (MED33A) (Arabidopsis thaliana (Mouse-ear cress)).